The following is a 240-amino-acid chain: Cysteine-rich secretory protein (240 aa).

A signal peptide spans 1-19 (MIAFIVLPILAAVLQQSSG). One can recognise an SCP domain in the interval 38–166 (VDLHNSLRRS…EYSYFYVCQY (129 aa)). 8 disulfides stabilise this stretch: C75-C153, C92-C167, C148-C164, C186-C193, C189-C198, C202-C235, C211-C229, and C220-C233. The ShKT domain occupies 202–235 (CTKEDKYSNCKSLVQQAGCQDKQMQSDCSAICFC).

The protein belongs to the CRISP family. In terms of tissue distribution, expressed by the venom gland.

Its subcellular location is the secreted. In terms of biological role, weakly blocks contraction of smooth muscle elicited by high potassium-induced depolarization, but does not block caffeine-stimulated contraction. May target voltage-gated calcium channels on smooth muscle. The sequence is that of Cysteine-rich secretory protein from Crotalus adamanteus (Eastern diamondback rattlesnake).